The primary structure comprises 441 residues: Zinc finger and BTB domain-containing protein 8A (441 aa).

The BTB domain maps to cysteine 24–glycine 92. The disordered stretch occupies residues leucine 135–glutamine 248. Residues serine 161 and serine 167 each carry the phosphoserine modification. Glycyl lysine isopeptide (Lys-Gly) (interchain with G-Cter in SUMO2) cross-links involve residues lysine 178, lysine 182, and lysine 199. Composition is skewed to basic and acidic residues over residues alanine 198–lysine 208 and glycine 227–glutamine 242. 2 consecutive C2H2-type zinc fingers follow at residues phenylalanine 282–histidine 304 and tyrosine 310–histidine 333. Lysine 437 is covalently cross-linked (Glycyl lysine isopeptide (Lys-Gly) (interchain with G-Cter in SUMO2)).

It localises to the nucleus. Its function is as follows. May be involved in transcriptional regulation. In Rattus norvegicus (Rat), this protein is Zinc finger and BTB domain-containing protein 8A (Zbtb8a).